A 252-amino-acid chain; its full sequence is tRNA (guanine-N(1)-)-methyltransferase (252 aa).

S-adenosyl-L-methionine is bound by residues G113 and 133–138 (IGDYVL).

This sequence belongs to the RNA methyltransferase TrmD family. As to quaternary structure, homodimer.

The protein resides in the cytoplasm. It catalyses the reaction guanosine(37) in tRNA + S-adenosyl-L-methionine = N(1)-methylguanosine(37) in tRNA + S-adenosyl-L-homocysteine + H(+). Its function is as follows. Specifically methylates guanosine-37 in various tRNAs. The polypeptide is tRNA (guanine-N(1)-)-methyltransferase (Nitrosococcus oceani (strain ATCC 19707 / BCRC 17464 / JCM 30415 / NCIMB 11848 / C-107)).